Here is a 320-residue protein sequence, read N- to C-terminus: Malate dehydrogenase (320 aa).

NAD(+)-binding positions include Gly10–Gly15 and Asp34. Substrate contacts are provided by Arg83 and Arg89. Residues Asn96 and Ile119–Asn121 contribute to the NAD(+) site. Substrate contacts are provided by Asn121 and Arg152. The active-site Proton acceptor is His176.

Belongs to the LDH/MDH superfamily. MDH type 3 family.

The catalysed reaction is (S)-malate + NAD(+) = oxaloacetate + NADH + H(+). Catalyzes the reversible oxidation of malate to oxaloacetate. The protein is Malate dehydrogenase of Caulobacter vibrioides (strain NA1000 / CB15N) (Caulobacter crescentus).